A 179-amino-acid polypeptide reads, in one-letter code: GTP-dependent dephospho-CoA kinase (179 aa).

GTP-binding residues include aspartate 43, valine 45, aspartate 62, glutamate 120, and aspartate 143.

The protein belongs to the GTP-dependent DPCK family.

It carries out the reaction 3'-dephospho-CoA + GTP = GDP + CoA + H(+). It functions in the pathway cofactor biosynthesis; coenzyme A biosynthesis. Catalyzes the GTP-dependent phosphorylation of the 3'-hydroxyl group of dephosphocoenzyme A to form coenzyme A (CoA). The sequence is that of GTP-dependent dephospho-CoA kinase from Haloarcula marismortui (strain ATCC 43049 / DSM 3752 / JCM 8966 / VKM B-1809) (Halobacterium marismortui).